The chain runs to 961 residues: E3 ubiquitin-protein ligase TRIM37 (961 aa).

Methionine 1 carries the post-translational modification N-acetylmethionine. Residues 15–55 (CFICMEKLRDARLCPHCSKLCCFSCIRRWLTEQRAQCPHCR) form an RING-type; degenerate zinc finger. Residues 90–132 (NEKDKCENHHEKLSVFCWTCKKCICHQCALWGGMHGGHTFKPL) form a B box-type zinc finger. The Zn(2+) site is built by cysteine 95, histidine 98, cysteine 117, and histidine 124. Positions 132–234 (LAEIYEQHVT…VEHQLRSCSK (103 aa)) form a coiled coil. In terms of domain architecture, MATH spans 276-403 (YDSATFVLEN…NDTVILRFQV (128 aa)). The stretch at 419–450 (ITQLEAAQTGYIQQINNLKERLTIELSRTQKS) forms a coiled coil. 5 disordered regions span residues 447 to 514 (TQKS…HHEL), 529 to 561 (VNHL…SGEN), 645 to 665 (SLLQ…KQQA), 776 to 811 (AVDS…SPRA), and 874 to 961 (LESH…GGGR). Position 454 is a phosphoserine (serine 454). Basic and acidic residues predominate over residues 504 to 514 (KIQNEDYHHEL). The span at 535-545 (SSSSASSTATS) shows a compositional bias: low complexity. Residues 548–561 (EENDIDEETMSGEN) show a composition bias toward acidic residues. Residues 776 to 787 (AVDSGENSRSKG) show a composition bias toward basic and acidic residues. Residues 795-806 (GSSGSSQSGSRH) show a composition bias toward low complexity. Positions 903–915 (SDIECDTENEEQE) are enriched in acidic residues.

This sequence belongs to the TRIM/RBCC family. In terms of assembly, associates with the PRC2/EED-EZH2 complex. Auto-ubiquitinated. In terms of tissue distribution, highly expressed in testis and brain. In embryonic tissues, expressed in epithelia, including ducts of the developing pancreas, epithelium of the midgut and nasal epithelium. In adult, detected in the central and peripheral nervous systems, including enteric ganglia, retina and the adrenal medulla (at protein level).

The protein resides in the chromosome. It localises to the cytoplasm. The protein localises to the perinuclear region. It is found in the peroxisome membrane. It catalyses the reaction S-ubiquitinyl-[E2 ubiquitin-conjugating enzyme]-L-cysteine + [acceptor protein]-L-lysine = [E2 ubiquitin-conjugating enzyme]-L-cysteine + N(6)-ubiquitinyl-[acceptor protein]-L-lysine.. Its pathway is protein modification; protein ubiquitination. Functionally, E3 ubiquitin-protein ligase required to prevent centriole reduplication. Probably acts by ubiquitinating positive regulators of centriole reduplication. Mediates monoubiquitination of 'Lys-119' of histone H2A (H2AK119Ub), a specific tag for epigenetic transcriptional repression: associates with some Polycomb group (PcG) multiprotein PRC2-like complex and mediates repression of target genes. Also acts as a positive regulator of peroxisome import by mediating monoubiquitination of PEX5 at 'Lys-472': monoubiquitination promotes PEX5 stabilitation by preventing its polyubiquitination and degradation by the proteasome. The chain is E3 ubiquitin-protein ligase TRIM37 from Mus musculus (Mouse).